A 140-amino-acid chain; its full sequence is N14 matrix protein (140 aa).

Positions 1–25 are cleaved as a signal peptide; the sequence is MACTLRLTIAALVLLGICHLSRPVA.

This sequence belongs to the N16 matrix protein family. As to quaternary structure, heterooligomer; disulfide-linked. Pif97, Pif80, N16 and other proteins form a complex. Component of conchiolin, the organic matrix of nacre. Only expressed in the dorsal region of the mantle.

The protein localises to the secreted. It localises to the extracellular space. Its subcellular location is the extracellular matrix. May be specifically involved in the formation of the nacreous layer. In Pinctada maxima (Silver-lipped pearl oyster), this protein is N14 matrix protein.